The following is a 253-amino-acid chain: Pupal cuticle protein (253 aa).

The N-terminal stretch at 1-18 is a signal peptide; it reads MKSMIVVACLALACGAHA. Polar residues predominate over residues 54–66; that stretch reads LQQASKNNPNPND. The segment at 54 to 74 is disordered; it reads LQQASKNNPNPNDDGSYDPRW. Tandem repeats lie at residues 97 to 100, 115 to 118, and 154 to 157. Residues 155–167 are compositionally biased toward low complexity; that stretch reads APAQQQWNAPAHQ. Disordered stretches follow at residues 155–178 and 187–206; these read APAQ…QDWN and APAH…APAH. Positions 189-201 are enriched in polar residues; the sequence is AHQSWNGAPSWQS.

Functionally, component of the cuticle of the pupae of silk moth. The protein is Pupal cuticle protein (PCP) of Bombyx mori (Silk moth).